The sequence spans 381 residues: Homoserine O-succinyltransferase (381 aa).

In terms of domain architecture, AB hydrolase-1 spans 45–360 (NAVLVCHALN…PHGHDAFLLD (316 aa)). Serine 151 (nucleophile) is an active-site residue. Arginine 221 contributes to the substrate binding site. Active-site residues include aspartate 321 and histidine 354. Residue aspartate 355 participates in substrate binding.

It belongs to the AB hydrolase superfamily. MetX family. In terms of assembly, homodimer.

Its subcellular location is the cytoplasm. It catalyses the reaction L-homoserine + succinyl-CoA = O-succinyl-L-homoserine + CoA. Its pathway is amino-acid biosynthesis; L-methionine biosynthesis via de novo pathway; O-succinyl-L-homoserine from L-homoserine: step 1/1. Transfers a succinyl group from succinyl-CoA to L-homoserine, forming succinyl-L-homoserine. This Paraburkholderia xenovorans (strain LB400) protein is Homoserine O-succinyltransferase.